The chain runs to 1004 residues: 2-oxoglutarate dehydrogenase E1 component (1004 aa).

Belongs to the alpha-ketoglutarate dehydrogenase family. In terms of assembly, homodimer. Part of the 2-oxoglutarate dehydrogenase (OGDH) complex composed of E1 (2-oxoglutarate dehydrogenase), E2 (dihydrolipoamide succinyltransferase) and E3 (dihydrolipoamide dehydrogenase); the complex contains multiple copies of the three enzymatic components (E1, E2 and E3). It depends on thiamine diphosphate as a cofactor.

The enzyme catalyses N(6)-[(R)-lipoyl]-L-lysyl-[protein] + 2-oxoglutarate + H(+) = N(6)-[(R)-S(8)-succinyldihydrolipoyl]-L-lysyl-[protein] + CO2. Functionally, E1 component of the 2-oxoglutarate dehydrogenase (OGDH) complex which catalyzes the decarboxylation of 2-oxoglutarate, the first step in the conversion of 2-oxoglutarate to succinyl-CoA and CO(2). The sequence is that of 2-oxoglutarate dehydrogenase E1 component from Brucella canis (strain ATCC 23365 / NCTC 10854 / RM-666).